A 425-amino-acid chain; its full sequence is Dihydroorotase (425 aa).

Residues His-59 and His-61 each coordinate Zn(2+). Substrate-binding positions include 61–63 (HLR) and Asn-93. The Zn(2+) site is built by Asp-151, His-178, and His-231. Substrate is bound at residue Asn-277. Asp-304 is a binding site for Zn(2+). Residue Asp-304 is part of the active site. Substrate-binding positions include His-308 and 322–323 (FG).

This sequence belongs to the metallo-dependent hydrolases superfamily. DHOase family. Class I DHOase subfamily. The cofactor is Zn(2+).

The catalysed reaction is (S)-dihydroorotate + H2O = N-carbamoyl-L-aspartate + H(+). It functions in the pathway pyrimidine metabolism; UMP biosynthesis via de novo pathway; (S)-dihydroorotate from bicarbonate: step 3/3. In terms of biological role, catalyzes the reversible cyclization of carbamoyl aspartate to dihydroorotate. This is Dihydroorotase from Staphylococcus epidermidis (strain ATCC 35984 / DSM 28319 / BCRC 17069 / CCUG 31568 / BM 3577 / RP62A).